Consider the following 631-residue polypeptide: Pescadillo homolog (631 aa).

The 94-residue stretch at 321–414 folds into the BRCT domain; it reads RLRTLFKGLK…QLLPTNDYFL (94 aa). A compositionally biased stretch (basic and acidic residues) spans 428-442; the sequence is SKRDSYIPPEEKALH. Disordered regions lie at residues 428–471, 489–561, and 602–631; these read SKRD…EADQ, YKKY…VDEH, and ADNK…KLVK. Ser453 and Ser457 each carry phosphoserine. 2 stretches are compositionally biased toward acidic residues: residues 453 to 471 and 498 to 525; these read SEEE…EADQ and VNED…EDVD. A compositionally biased stretch (basic and acidic residues) spans 526 to 538; the sequence is EQTKRKQQEKEKM. Basic residues predominate over residues 544 to 553; it reads KVHKVNKRQV. A coiled-coil region spans residues 591–631; it reads WLLRKKRRNIDADNKEAKKAAKREARKQAAEAAARAAKLVK. The segment covering 602–619 has biased composition (basic and acidic residues); sequence ADNKEAKKAAKREARKQA. A compositionally biased stretch (low complexity) spans 620–631; that stretch reads AEAAARAAKLVK.

It belongs to the pescadillo family.

It localises to the nucleus. The protein localises to the nucleolus. It is found in the nucleoplasm. Its function is as follows. Required for maturation of ribosomal RNAs and formation of the large ribosomal subunit. In Drosophila pseudoobscura pseudoobscura (Fruit fly), this protein is Pescadillo homolog.